Reading from the N-terminus, the 119-residue chain is Large ribosomal subunit protein uL24 (119 aa).

This sequence belongs to the universal ribosomal protein uL24 family. Part of the 50S ribosomal subunit.

Functionally, one of two assembly initiator proteins, it binds directly to the 5'-end of the 23S rRNA, where it nucleates assembly of the 50S subunit. In terms of biological role, one of the proteins that surrounds the polypeptide exit tunnel on the outside of the subunit. This chain is Large ribosomal subunit protein uL24, found in Leifsonia xyli subsp. xyli (strain CTCB07).